A 25-amino-acid chain; its full sequence is Bacteriocin mutacin F-59.1 (25 aa).

C9 and X14 are joined by a disulfide.

Its subcellular location is the secreted. Its function is as follows. Bactericidal activity against a wide range of pathogenic bacteria, including Bacillus spp., Enterococcus spp., Listeria spp., Staphylococcus spp. and Streptococcus spp. Has no activity against Lactobacillus salivarius, Staphylococcus aureus, Streptococcus pyogenes and Streptococcus suis. The protein is Bacteriocin mutacin F-59.1 of Streptococcus mutans.